Here is a 342-residue protein sequence, read N- to C-terminus: Ketol-acid reductoisomerase (NADP(+)) (342 aa).

The KARI N-terminal Rossmann domain maps to 2–182 (AEIYYDNDAD…GGLRAGGIKT (181 aa)). Residues 25–28 (YGSQ), lysine 48, serine 51, serine 53, and 83–86 (DQVQ) each bind NADP(+). Histidine 108 is a catalytic residue. Glycine 134 provides a ligand contact to NADP(+). Residues 183–328 (TFTEETETDL…RELRKLFAWN (146 aa)) enclose the KARI C-terminal knotted domain. Mg(2+)-binding residues include aspartate 191, glutamate 195, glutamate 227, and glutamate 231. Serine 252 is a substrate binding site.

It belongs to the ketol-acid reductoisomerase family. Mg(2+) serves as cofactor.

The catalysed reaction is (2R)-2,3-dihydroxy-3-methylbutanoate + NADP(+) = (2S)-2-acetolactate + NADPH + H(+). The enzyme catalyses (2R,3R)-2,3-dihydroxy-3-methylpentanoate + NADP(+) = (S)-2-ethyl-2-hydroxy-3-oxobutanoate + NADPH + H(+). The protein operates within amino-acid biosynthesis; L-isoleucine biosynthesis; L-isoleucine from 2-oxobutanoate: step 2/4. Its pathway is amino-acid biosynthesis; L-valine biosynthesis; L-valine from pyruvate: step 2/4. In terms of biological role, involved in the biosynthesis of branched-chain amino acids (BCAA). Catalyzes an alkyl-migration followed by a ketol-acid reduction of (S)-2-acetolactate (S2AL) to yield (R)-2,3-dihydroxy-isovalerate. In the isomerase reaction, S2AL is rearranged via a Mg-dependent methyl migration to produce 3-hydroxy-3-methyl-2-ketobutyrate (HMKB). In the reductase reaction, this 2-ketoacid undergoes a metal-dependent reduction by NADPH to yield (R)-2,3-dihydroxy-isovalerate. The sequence is that of Ketol-acid reductoisomerase (NADP(+)) from Leifsonia xyli subsp. xyli (strain CTCB07).